Here is a 398-residue protein sequence, read N- to C-terminus: 1-deoxy-D-xylulose 5-phosphate reductoisomerase (398 aa).

Residues T10, G11, S12, I13, N38, and N124 each contribute to the NADPH site. K125 contacts 1-deoxy-D-xylulose 5-phosphate. E126 lines the NADPH pocket. D150 contributes to the Mn(2+) binding site. Residues S151, E152, S186, and H209 each contribute to the 1-deoxy-D-xylulose 5-phosphate site. Mn(2+) is bound at residue E152. G215 lines the NADPH pocket. 1-deoxy-D-xylulose 5-phosphate contacts are provided by S222, N227, K228, and E231. E231 lines the Mn(2+) pocket.

It belongs to the DXR family. The cofactor is Mg(2+). Mn(2+) serves as cofactor.

The enzyme catalyses 2-C-methyl-D-erythritol 4-phosphate + NADP(+) = 1-deoxy-D-xylulose 5-phosphate + NADPH + H(+). The protein operates within isoprenoid biosynthesis; isopentenyl diphosphate biosynthesis via DXP pathway; isopentenyl diphosphate from 1-deoxy-D-xylulose 5-phosphate: step 1/6. Functionally, catalyzes the NADPH-dependent rearrangement and reduction of 1-deoxy-D-xylulose-5-phosphate (DXP) to 2-C-methyl-D-erythritol 4-phosphate (MEP). The chain is 1-deoxy-D-xylulose 5-phosphate reductoisomerase from Baumannia cicadellinicola subsp. Homalodisca coagulata.